A 446-amino-acid chain; its full sequence is N-succinylarginine dihydrolase (446 aa).

Residues 19 to 28, Asn-110, and 137 to 138 contribute to the substrate site; these read AGLSYGNVAS and HR. The active site involves Glu-174. Substrate is bound at residue Arg-214. Residue His-250 is part of the active site. Positions 252 and 363 each coordinate substrate. The active-site Nucleophile is the Cys-369.

This sequence belongs to the succinylarginine dihydrolase family. Homodimer.

The catalysed reaction is N(2)-succinyl-L-arginine + 2 H2O + 2 H(+) = N(2)-succinyl-L-ornithine + 2 NH4(+) + CO2. Its pathway is amino-acid degradation; L-arginine degradation via AST pathway; L-glutamate and succinate from L-arginine: step 2/5. In terms of biological role, catalyzes the hydrolysis of N(2)-succinylarginine into N(2)-succinylornithine, ammonia and CO(2). The chain is N-succinylarginine dihydrolase from Pseudoalteromonas atlantica (strain T6c / ATCC BAA-1087).